A 582-amino-acid polypeptide reads, in one-letter code: Proline--tRNA ligase (582 aa).

The protein belongs to the class-II aminoacyl-tRNA synthetase family. ProS type 1 subfamily. As to quaternary structure, homodimer.

It is found in the cytoplasm. The enzyme catalyses tRNA(Pro) + L-proline + ATP = L-prolyl-tRNA(Pro) + AMP + diphosphate. In terms of biological role, catalyzes the attachment of proline to tRNA(Pro) in a two-step reaction: proline is first activated by ATP to form Pro-AMP and then transferred to the acceptor end of tRNA(Pro). As ProRS can inadvertently accommodate and process non-cognate amino acids such as alanine and cysteine, to avoid such errors it has two additional distinct editing activities against alanine. One activity is designated as 'pretransfer' editing and involves the tRNA(Pro)-independent hydrolysis of activated Ala-AMP. The other activity is designated 'posttransfer' editing and involves deacylation of mischarged Ala-tRNA(Pro). The misacylated Cys-tRNA(Pro) is not edited by ProRS. This chain is Proline--tRNA ligase, found in Mycobacterium avium (strain 104).